The sequence spans 363 residues: Probable L-tyrosine/L-aspartate decarboxylase (363 aa).

An N6-(pyridoxal phosphate)lysine modification is found at Lys-224.

It belongs to the group II decarboxylase family. MfnA subfamily. Pyridoxal 5'-phosphate serves as cofactor.

The enzyme catalyses L-tyrosine + H(+) = tyramine + CO2. The catalysed reaction is L-aspartate + H(+) = beta-alanine + CO2. It functions in the pathway cofactor biosynthesis; methanofuran biosynthesis. The protein operates within cofactor biosynthesis; coenzyme A biosynthesis. Its function is as follows. Catalyzes the decarboxylation of L-tyrosine to produce tyramine for methanofuran biosynthesis. Can also catalyze the decarboxylation of L-aspartate to produce beta-alanine for coenzyme A (CoA) biosynthesis. The chain is Probable L-tyrosine/L-aspartate decarboxylase from Methanosphaerula palustris (strain ATCC BAA-1556 / DSM 19958 / E1-9c).